We begin with the raw amino-acid sequence, 195 residues long: Glycerol-3-phosphate acyltransferase 1 (195 aa).

The next 5 membrane-spanning stretches (helical) occupy residues 6-26, 52-72, 74-94, 117-137, and 168-188; these read VILT…GHFL, LGIA…FLVV, LGLK…AVAG, LAVY…LTFL, and FGLG…ISLF.

The protein belongs to the PlsY family. In terms of assembly, probably interacts with PlsX.

The protein resides in the cell membrane. It catalyses the reaction an acyl phosphate + sn-glycerol 3-phosphate = a 1-acyl-sn-glycero-3-phosphate + phosphate. Its pathway is lipid metabolism; phospholipid metabolism. Catalyzes the transfer of an acyl group from acyl-phosphate (acyl-PO(4)) to glycerol-3-phosphate (G3P) to form lysophosphatidic acid (LPA). This enzyme utilizes acyl-phosphate as fatty acyl donor, but not acyl-CoA or acyl-ACP. The protein is Glycerol-3-phosphate acyltransferase 1 of Moorella thermoacetica (strain ATCC 39073 / JCM 9320).